A 172-amino-acid polypeptide reads, in one-letter code: MLLLPPRPPHPRSSSPEVMDPPPPKTPPFPKAEGPSSTSSSVAGPRPPRLGRHLLIDANGVPYTYTVQLEEEPRGPPQREATPGEPGPRKGYSCPECARVFASPLRLQSHRVSHSDLKPFTCGACGKAFKRSSHLSRHRATHRARAGPPHTCPLCPRRFQDAAELAQHVRLH.

Positions methionine 1–tyrosine 92 are disordered. A compositionally biased stretch (pro residues) spans methionine 19 to proline 30. Residue lysine 31 forms a Glycyl lysine isopeptide (Lys-Gly) (interchain with G-Cter in SUMO2) linkage. The C2H2-type 1 zinc finger occupies tyrosine 92–histidine 114. Residue lysine 118 forms a Glycyl lysine isopeptide (Lys-Gly) (interchain with G-Cter in SUMO2) linkage. C2H2-type zinc fingers lie at residues phenylalanine 120–histidine 142 and histidine 150–histidine 172.

Interacts with SMAD2.

Its subcellular location is the nucleus. Involved in the regulation of endothelial cell proliferation and migration. Mediates H(2)O(2)-induced leukocyte chemotaxis by elevating interleukin-8 production and may play a role in inflammation. May be involved in transcriptional regulation. In Mus musculus (Mouse), this protein is Zinc finger protein 580 (Znf580).